A 404-amino-acid polypeptide reads, in one-letter code: Cysteine desulfurase IscS (404 aa).

Residues 75-76 (AT), Asn-155, Gln-183, and 203-205 (SGH) contribute to the pyridoxal 5'-phosphate site. Lys-206 carries the post-translational modification N6-(pyridoxal phosphate)lysine. Thr-243 contributes to the pyridoxal 5'-phosphate binding site. The active-site Cysteine persulfide intermediate is Cys-328. Residue Cys-328 coordinates [2Fe-2S] cluster.

It belongs to the class-V pyridoxal-phosphate-dependent aminotransferase family. NifS/IscS subfamily. Homodimer. Forms a heterotetramer with IscU, interacts with other sulfur acceptors. Pyridoxal 5'-phosphate is required as a cofactor.

Its subcellular location is the cytoplasm. The enzyme catalyses (sulfur carrier)-H + L-cysteine = (sulfur carrier)-SH + L-alanine. It participates in cofactor biosynthesis; iron-sulfur cluster biosynthesis. In terms of biological role, master enzyme that delivers sulfur to a number of partners involved in Fe-S cluster assembly, tRNA modification or cofactor biosynthesis. Catalyzes the removal of elemental sulfur atoms from cysteine to produce alanine. Functions as a sulfur delivery protein for Fe-S cluster synthesis onto IscU, an Fe-S scaffold assembly protein, as well as other S acceptor proteins. In Shewanella denitrificans (strain OS217 / ATCC BAA-1090 / DSM 15013), this protein is Cysteine desulfurase IscS.